A 407-amino-acid chain; its full sequence is MKRTFIMVLDSFGIGASADANKFGDEGADTLGHIAEACARGEADIGRSGPLTLPNLSRLGLGKAAEESTGKFPVGLDKNADIIGAYGYASELSSGKDTPSGHWEIAGVPVLFDWGYFSDVENSFPQELLDKLVKRANLPGYLGNCHSSGTVILDQLGEEHMKTGKPIFYTSADSVFQIACHEETFGLDRLYELCEIAREELTEGGYNIGRVIARPFIGDKPGNFQRTGNRHDLAVEPPAPTMLKKLVDEKGGEVVSIGKIADIYAHVGITQKVKATGLDALFDATIEEMKKAGDNTIVFTNFVDFDSSYGHRRDVAGYAAALELFDRRLPELMALVKEDDILLLTADHGCDPTWPGTDHTREHIPVLVYGPKVKPGSLGHRETFADIGQTVAKYFDLSPMDYGKNML.

Mn(2+) contacts are provided by Asp-10, Asp-306, His-311, Asp-347, His-348, and His-359.

Belongs to the phosphopentomutase family. Mn(2+) is required as a cofactor.

Its subcellular location is the cytoplasm. It catalyses the reaction 2-deoxy-alpha-D-ribose 1-phosphate = 2-deoxy-D-ribose 5-phosphate. The catalysed reaction is alpha-D-ribose 1-phosphate = D-ribose 5-phosphate. The protein operates within carbohydrate degradation; 2-deoxy-D-ribose 1-phosphate degradation; D-glyceraldehyde 3-phosphate and acetaldehyde from 2-deoxy-alpha-D-ribose 1-phosphate: step 1/2. In terms of biological role, isomerase that catalyzes the conversion of deoxy-ribose 1-phosphate (dRib-1-P) and ribose 1-phosphate (Rib-1-P) to deoxy-ribose 5-phosphate (dRib-5-P) and ribose 5-phosphate (Rib-5-P), respectively. The sequence is that of Phosphopentomutase from Yersinia enterocolitica serotype O:8 / biotype 1B (strain NCTC 13174 / 8081).